The following is a 61-amino-acid chain: Small ribosomal subunit protein uS14 (61 aa).

Residues Cys24, Cys27, Cys40, and Cys43 each coordinate Zn(2+).

It belongs to the universal ribosomal protein uS14 family. Zinc-binding uS14 subfamily. In terms of assembly, part of the 30S ribosomal subunit. Contacts proteins S3 and S10. It depends on Zn(2+) as a cofactor.

In terms of biological role, binds 16S rRNA, required for the assembly of 30S particles and may also be responsible for determining the conformation of the 16S rRNA at the A site. The polypeptide is Small ribosomal subunit protein uS14 (Geotalea daltonii (strain DSM 22248 / JCM 15807 / FRC-32) (Geobacter daltonii)).